Reading from the N-terminus, the 79-residue chain is Small ribosomal subunit protein bS18 (79 aa).

This sequence belongs to the bacterial ribosomal protein bS18 family. As to quaternary structure, part of the 30S ribosomal subunit. Forms a tight heterodimer with protein bS6.

Binds as a heterodimer with protein bS6 to the central domain of the 16S rRNA, where it helps stabilize the platform of the 30S subunit. The sequence is that of Small ribosomal subunit protein bS18 from Ureaplasma parvum serovar 3 (strain ATCC 27815 / 27 / NCTC 11736).